A 30-amino-acid polypeptide reads, in one-letter code: uncharacterized protein (30 aa).

Residues 9 to 26 traverse the membrane as a helical segment; the sequence is YRLVIIVLISVYYRYRFF.

It localises to the plastid. It is found in the chloroplast membrane. This is an uncharacterized protein from Marchantia polymorpha (Common liverwort).